A 182-amino-acid polypeptide reads, in one-letter code: Guanylate kinase (182 aa).

The Guanylate kinase-like domain occupies 2–180; it reads GTLTVITGPS…ALLKLEGLMG (179 aa). Residue 9–16 coordinates ATP; that stretch reads GPSGVGKG.

This sequence belongs to the guanylate kinase family.

The protein resides in the cytoplasm. The enzyme catalyses GMP + ATP = GDP + ADP. It catalyses the reaction dZMP + ATP = dZDP + ADP. It participates in purine metabolism. Its function is as follows. Essential for recycling GMP and indirectly, cGMP. Functionally, (Microbial infection) Catalyzes the phosphorylation of dZMP to dZDP, when the bacterium is infected by a phage that produces the substrate for the synthesis of dZTP (2- amino-2'-deoxyadenosine 5'-triphosphate), which is then used by the phage as a DNA polymerase substrate. This Parasynechococcus marenigrum (strain WH8102) protein is Guanylate kinase.